Here is a 111-residue protein sequence, read N- to C-terminus: Probable 4-amino-4-deoxy-L-arabinose-phosphoundecaprenol flippase subunit ArnE (111 aa).

Residues 1 to 35 lie on the Cytoplasmic side of the membrane; it reads MIWLTLVFASLLSVAGQLCQKQATCFAAVNKRRKH. The helical transmembrane segment at 36-56 threads the bilayer; that stretch reads IVLWLGLALACLGLAMVLWLL. Residues 40–109 enclose the EamA domain; that stretch reads LGLALACLGL…IIGGIVILGS (70 aa). At 57-60 the chain is on the periplasmic side; sequence VLQN. Residues 61–81 traverse the membrane as a helical segment; the sequence is VPVGIAYPMLSLNFVWVTLAA. The Cytoplasmic portion of the chain corresponds to 82–87; it reads VKLWHE. Residues 88 to 108 traverse the membrane as a helical segment; it reads PVSLRHWCGLAFIIGGIVILG. Residues 109 to 111 lie on the Periplasmic side of the membrane; it reads STV.

The protein belongs to the ArnE family. In terms of assembly, heterodimer of ArnE and ArnF.

The protein localises to the cell inner membrane. Its pathway is bacterial outer membrane biogenesis; lipopolysaccharide biosynthesis. Functionally, translocates 4-amino-4-deoxy-L-arabinose-phosphoundecaprenol (alpha-L-Ara4N-phosphoundecaprenol) from the cytoplasmic to the periplasmic side of the inner membrane. This is Probable 4-amino-4-deoxy-L-arabinose-phosphoundecaprenol flippase subunit ArnE from Escherichia coli O81 (strain ED1a).